Consider the following 145-residue polypeptide: Superoxide dismutase [Mn/Fe] (145 aa).

The Fe(3+) site is built by His-10 and His-64. 2 residues coordinate Mn(2+): His-10 and His-64.

This sequence belongs to the iron/manganese superoxide dismutase family. Mn(2+) is required as a cofactor. Requires Fe(3+) as cofactor.

The catalysed reaction is 2 superoxide + 2 H(+) = H2O2 + O2. Functionally, destroys superoxide anion radicals which are normally produced within the cells and which are toxic to biological systems. Catalyzes the dismutation of superoxide anion radicals into O2 and H2O2 by successive reduction and oxidation of the transition metal ion at the active site. The polypeptide is Superoxide dismutase [Mn/Fe] (sodA) (Streptococcus porcinus).